Here is a 110-residue protein sequence, read N- to C-terminus: Large ribosomal subunit protein eL30 (110 aa).

This sequence belongs to the eukaryotic ribosomal protein eL30 family.

This Methanocaldococcus jannaschii (strain ATCC 43067 / DSM 2661 / JAL-1 / JCM 10045 / NBRC 100440) (Methanococcus jannaschii) protein is Large ribosomal subunit protein eL30 (rpl30e).